Here is a 365-residue protein sequence, read N- to C-terminus: Endophilin-B1 (365 aa).

Met1 bears the N-acetylmethionine mark. The tract at residues 1-30 (MNIMDFNVKKLAADAGTFLSRAVQFTEEKL) is membrane-binding amphipathic helix. Residues 1-37 (MNIMDFNVKKLAADAGTFLSRAVQFTEEKLGQAEKTE) form a required for membrane binding region. Positions 27–261 (EEKLGQAEKT…LGSFPSNYVS (235 aa)) constitute a BAR domain. At Thr145 the chain carries Phosphothreonine; by CDK5. Positions 156-185 (KTIAKERKLLQNKRLDLDAAKTRLKKAKAA) form a coiled coil. An SH3 domain is found at 305 to 365 (SSTRKARVLY…VPITYLELLN (61 aa)).

This sequence belongs to the endophilin family. In terms of assembly, homodimer, and heterodimer with SH3GLB2. Binds BAX; induction of apoptosis augments BAX binding. Binds DNM1, HTT, AMPH, BIN1 and ARFGAP1. Interacts with UVRAG; UVRAG bridges the interaction to BECN1 indicative for an association with the PI3K complex II (PI3KC3-C2). In terms of processing, phosphorylated at Thr-145 by CDK5; this phosphorylation is required for autophagy induction in starved neurons and facilitates homodimerization. Expressed in brain, heart, lung and spleen. Low level in liver and testis.

Its subcellular location is the cytoplasm. The protein localises to the golgi apparatus membrane. It localises to the mitochondrion outer membrane. The protein resides in the cytoplasmic vesicle. It is found in the autophagosome membrane. Its subcellular location is the midbody. Its function is as follows. May be required for normal outer mitochondrial membrane dynamics. Required for coatomer-mediated retrograde transport in certain cells. May recruit other proteins to membranes with high curvature. May promote membrane fusion. Involved in activation of caspase-dependent apoptosis by promoting BAX/BAK1 activation. Involved in caspase-independent apoptosis during nutrition starvation and involved in the regulation of autophagy. Activates lipid kinase activity of PIK3C3 during autophagy probably by associating with the PI3K complex II (PI3KC3-C2). Associated with PI3KC3-C2 during autophagy may regulate the trafficking of ATG9A from the Golgi complex to the peripheral cytoplasm for the formation of autophagosomes by inducing Golgi membrane tubulation and fragmentation. Involved in regulation of degradative endocytic trafficking and cytokinesis, probably in the context of PI3KC3-C2. The polypeptide is Endophilin-B1 (Rattus norvegicus (Rat)).